A 343-amino-acid polypeptide reads, in one-letter code: Glutamine synthetase (343 aa).

A GS beta-grasp domain is found at 3 to 87; sequence FKAEYIWIDG…CEVLNIDLTP (85 aa). A GS catalytic domain is found at 92–343; that stretch reads TRAALAEVAE…CSALEKAGQV (252 aa). 4 residues coordinate Mg(2+): glutamate 113, glutamate 115, glutamate 174, and glutamate 181. Residue glutamate 279 coordinates L-glutamate.

Belongs to the glutamine synthetase family. As to quaternary structure, homooctamer and homotetramer. Mg(2+) is required as a cofactor.

It is found in the cytoplasm. The enzyme catalyses L-glutamate + NH4(+) + ATP = L-glutamine + ADP + phosphate + H(+). Its function is as follows. Catalyzes the ATP-dependent biosynthesis of glutamine from glutamate and ammonia. The sequence is that of Glutamine synthetase from Streptomyces viridochromogenes.